A 256-amino-acid polypeptide reads, in one-letter code: Imidazole glycerol phosphate synthase subunit HisF (256 aa).

Active-site residues include Asp-13 and Asp-132.

This sequence belongs to the HisA/HisF family. As to quaternary structure, heterodimer of HisH and HisF.

It localises to the cytoplasm. The catalysed reaction is 5-[(5-phospho-1-deoxy-D-ribulos-1-ylimino)methylamino]-1-(5-phospho-beta-D-ribosyl)imidazole-4-carboxamide + L-glutamine = D-erythro-1-(imidazol-4-yl)glycerol 3-phosphate + 5-amino-1-(5-phospho-beta-D-ribosyl)imidazole-4-carboxamide + L-glutamate + H(+). Its pathway is amino-acid biosynthesis; L-histidine biosynthesis; L-histidine from 5-phospho-alpha-D-ribose 1-diphosphate: step 5/9. Functionally, IGPS catalyzes the conversion of PRFAR and glutamine to IGP, AICAR and glutamate. The HisF subunit catalyzes the cyclization activity that produces IGP and AICAR from PRFAR using the ammonia provided by the HisH subunit. The sequence is that of Imidazole glycerol phosphate synthase subunit HisF from Leptospira interrogans serogroup Icterohaemorrhagiae serovar copenhageni (strain Fiocruz L1-130).